We begin with the raw amino-acid sequence, 376 residues long: N-acetyldiaminopimelate deacetylase (376 aa).

Asp-69 is a catalytic residue. Glu-128 (proton acceptor) is an active-site residue.

The protein belongs to the peptidase M20A family. N-acetyldiaminopimelate deacetylase subfamily.

It carries out the reaction N-acetyl-(2S,6S)-2,6-diaminopimelate + H2O = (2S,6S)-2,6-diaminopimelate + acetate. The protein operates within amino-acid biosynthesis; L-lysine biosynthesis via DAP pathway; LL-2,6-diaminopimelate from (S)-tetrahydrodipicolinate (acetylase route): step 3/3. In terms of biological role, catalyzes the conversion of N-acetyl-diaminopimelate to diaminopimelate and acetate. The polypeptide is N-acetyldiaminopimelate deacetylase (Streptococcus pneumoniae (strain 70585)).